The sequence spans 274 residues: Protein RecA (274 aa).

Residue 43-50 (GPESSGKT) participates in ATP binding.

It belongs to the RecA family.

The protein resides in the cytoplasm. Functionally, can catalyze the hydrolysis of ATP in the presence of single-stranded DNA, the ATP-dependent uptake of single-stranded DNA by duplex DNA, and the ATP-dependent hybridization of homologous single-stranded DNAs. It interacts with LexA causing its activation and leading to its autocatalytic cleavage. This chain is Protein RecA, found in Neisseria mucosa.